The following is a 309-amino-acid chain: Coproporphyrin III ferrochelatase (309 aa).

Fe-coproporphyrin III contacts are provided by residues Tyr-12, Arg-29, 45 to 46 (RY), Ser-53, and Tyr-124. Residues His-182 and Glu-263 each contribute to the Fe(2+) site.

It belongs to the ferrochelatase family.

Its subcellular location is the cytoplasm. It carries out the reaction Fe-coproporphyrin III + 2 H(+) = coproporphyrin III + Fe(2+). Its pathway is porphyrin-containing compound metabolism; protoheme biosynthesis. Its function is as follows. Involved in coproporphyrin-dependent heme b biosynthesis. Catalyzes the insertion of ferrous iron into coproporphyrin III to form Fe-coproporphyrin III. The chain is Coproporphyrin III ferrochelatase from Listeria monocytogenes serotype 4b (strain F2365).